A 288-amino-acid chain; its full sequence is Diaminopimelate epimerase (288 aa).

Positions 13, 46, and 66 each coordinate substrate. Residue Cys-75 is the Proton donor of the active site. Residues 76–77 (GN), Asn-166, Asn-199, and 217–218 (ER) each bind substrate. Cys-226 functions as the Proton acceptor in the catalytic mechanism. 227–228 (GT) contacts substrate.

This sequence belongs to the diaminopimelate epimerase family. Homodimer.

The protein localises to the cytoplasm. The enzyme catalyses (2S,6S)-2,6-diaminopimelate = meso-2,6-diaminopimelate. Its pathway is amino-acid biosynthesis; L-lysine biosynthesis via DAP pathway; DL-2,6-diaminopimelate from LL-2,6-diaminopimelate: step 1/1. In terms of biological role, catalyzes the stereoinversion of LL-2,6-diaminopimelate (L,L-DAP) to meso-diaminopimelate (meso-DAP), a precursor of L-lysine and an essential component of the bacterial peptidoglycan. The chain is Diaminopimelate epimerase from Cupriavidus metallidurans (strain ATCC 43123 / DSM 2839 / NBRC 102507 / CH34) (Ralstonia metallidurans).